Consider the following 376-residue polypeptide: Putative F-box/FBD/LRR-repeat protein At5g52460 (376 aa).

Residues 16 to 75 form the F-box domain; the sequence is RDEISSLPDDLLIQILLLVPIKDAVGTMILSKRWRYVWTLLPKLEYSDPGDECESVWKFL. LRR repeat units lie at residues 131–154 and 199–224; these read CKTL…VCLP and FAKV…KFLK. One can recognise an FBD domain in the interval 296–348; that stretch reads CHGTNQGTVPRCLSAHLDEEFVWHGYRGNEEETQLIRYIFANAKCLKKREIST.

The protein is Putative F-box/FBD/LRR-repeat protein At5g52460 (EDA41) of Arabidopsis thaliana (Mouse-ear cress).